The primary structure comprises 380 residues: Carbamoyl phosphate synthase small chain (380 aa).

A CPSase region spans residues 1–184 (MTTSTRGAHR…EAYVVPAIGE (184 aa)). L-glutamine is bound by residues S55, G236, and G238. Residues 188-380 (TVAAVDLGIK…FVNLMEGQRA (193 aa)) enclose the Glutamine amidotransferase type-1 domain. The active-site Nucleophile is C264. L-glutamine is bound by residues F265, Q268, N306, G308, and F309. Catalysis depends on residues H354 and E356.

It belongs to the CarA family. Composed of two chains; the small (or glutamine) chain promotes the hydrolysis of glutamine to ammonia, which is used by the large (or ammonia) chain to synthesize carbamoyl phosphate. Tetramer of heterodimers (alpha,beta)4.

The catalysed reaction is hydrogencarbonate + L-glutamine + 2 ATP + H2O = carbamoyl phosphate + L-glutamate + 2 ADP + phosphate + 2 H(+). It carries out the reaction L-glutamine + H2O = L-glutamate + NH4(+). It participates in amino-acid biosynthesis; L-arginine biosynthesis; carbamoyl phosphate from bicarbonate: step 1/1. It functions in the pathway pyrimidine metabolism; UMP biosynthesis via de novo pathway; (S)-dihydroorotate from bicarbonate: step 1/3. Its function is as follows. Small subunit of the glutamine-dependent carbamoyl phosphate synthetase (CPSase). CPSase catalyzes the formation of carbamoyl phosphate from the ammonia moiety of glutamine, carbonate, and phosphate donated by ATP, constituting the first step of 2 biosynthetic pathways, one leading to arginine and/or urea and the other to pyrimidine nucleotides. The small subunit (glutamine amidotransferase) binds and cleaves glutamine to supply the large subunit with the substrate ammonia. This is Carbamoyl phosphate synthase small chain from Streptomyces coelicolor (strain ATCC BAA-471 / A3(2) / M145).